The primary structure comprises 287 residues: Elongation factor Ts (287 aa).

Residues 77-80 form an involved in Mg(2+) ion dislocation from EF-Tu region; it reads TDFV.

Belongs to the EF-Ts family.

It localises to the cytoplasm. Its function is as follows. Associates with the EF-Tu.GDP complex and induces the exchange of GDP to GTP. It remains bound to the aminoacyl-tRNA.EF-Tu.GTP complex up to the GTP hydrolysis stage on the ribosome. This is Elongation factor Ts from Wolbachia sp. subsp. Brugia malayi (strain TRS).